The following is a 324-amino-acid chain: IDS-like terpene synthase 3 (324 aa).

Asp-77 and Asp-81 together coordinate Mg(2+).

It belongs to the FPP/GGPP synthase family. Mg(2+) is required as a cofactor.

The enzyme catalyses (2E)-geranyl diphosphate + H2O = linalool + diphosphate. It carries out the reaction (2E,6E)-farnesyl diphosphate + H2O = (6E)-nerolidol + diphosphate. Functionally, terpene synthase that shows monoterpene synthase activity and produces linalool, using geranyl diphosphate (GPP) as substrate. Also shows sesquiterpene synthase activity as it is able to convert farnesyl diphosphate (FPP) into (E)-nerolidol. In Melampsora lini (Rust fungus), this protein is IDS-like terpene synthase 3.